Here is a 338-residue protein sequence, read N- to C-terminus: 1-aminocyclopropane-1-carboxylate deaminase (338 aa).

The residue at position 51 (lysine 51) is an N6-(pyridoxal phosphate)lysine. Serine 78 (nucleophile) is an active-site residue.

Belongs to the ACC deaminase/D-cysteine desulfhydrase family. As to quaternary structure, homotrimer. Pyridoxal 5'-phosphate is required as a cofactor.

The catalysed reaction is 1-aminocyclopropane-1-carboxylate + H2O = 2-oxobutanoate + NH4(+). Functionally, catalyzes a cyclopropane ring-opening reaction, the irreversible conversion of 1-aminocyclopropane-1-carboxylate (ACC) to ammonia and alpha-ketobutyrate. Allows growth on ACC as a nitrogen source. This Paracidovorax citrulli (strain AAC00-1) (Acidovorax citrulli) protein is 1-aminocyclopropane-1-carboxylate deaminase.